The primary structure comprises 157 residues: Lipoprotein signal peptidase (157 aa).

3 helical membrane passes run 10–30 (LVFM…KYAI), 58–78 (FLEG…FIFL), and 84–104 (LFKN…SNVL). Catalysis depends on residues Asp114 and Asp131. A helical transmembrane segment spans residues 122 to 142 (FDFAIFNFADVMIDVGVGVLL).

It belongs to the peptidase A8 family.

It localises to the cell inner membrane. The enzyme catalyses Release of signal peptides from bacterial membrane prolipoproteins. Hydrolyzes -Xaa-Yaa-Zaa-|-(S,diacylglyceryl)Cys-, in which Xaa is hydrophobic (preferably Leu), and Yaa (Ala or Ser) and Zaa (Gly or Ala) have small, neutral side chains.. The protein operates within protein modification; lipoprotein biosynthesis (signal peptide cleavage). In terms of biological role, this protein specifically catalyzes the removal of signal peptides from prolipoproteins. In Helicobacter pylori (strain ATCC 700392 / 26695) (Campylobacter pylori), this protein is Lipoprotein signal peptidase.